Consider the following 326-residue polypeptide: D-alanine--D-alanine ligase (326 aa).

The ATP-grasp domain maps to 121–320 (ISVLRPYGIK…LKDLFGSTIE (200 aa)). Position 149 to 204 (149 to 204 (VDKVGLPCFVKANRAGSSFGVTKVKTEDEIISAAKTAFTEDDEAIIESFLDGTEVS)) interacts with ATP. Mg(2+)-binding residues include Glu275, Glu287, and Asn289.

Belongs to the D-alanine--D-alanine ligase family. Mg(2+) is required as a cofactor. Mn(2+) serves as cofactor.

It is found in the cytoplasm. The catalysed reaction is 2 D-alanine + ATP = D-alanyl-D-alanine + ADP + phosphate + H(+). Its pathway is cell wall biogenesis; peptidoglycan biosynthesis. Cell wall formation. In Christiangramia forsetii (strain DSM 17595 / CGMCC 1.15422 / KT0803) (Gramella forsetii), this protein is D-alanine--D-alanine ligase.